A 274-amino-acid polypeptide reads, in one-letter code: Mitochondrial S-adenosylmethionine carrier protein (274 aa).

3 Solcar repeats span residues 4–77, 86–168, and 177–265; these read PGFV…VKWF, LTPM…LKAL, and VDSW…THSL. The next 6 membrane-spanning stretches (helical) occupy residues 5–25, 49–69, 85–105, 142–162, 182–202, and 238–258; these read GFVA…LILF, IYAG…AFFI, YLTP…ACLI, RGYK…FPLW, SAVC…PLDV, and FAGV…FLGA.

This sequence belongs to the mitochondrial carrier (TC 2.A.29) family. As to expression, widely expressed. Highly expressed in testis, with moderate expression in brain, heart, kidney, lung, skeletal muscle, pancreas, small intestine and liver, and low expression in spleen.

The protein localises to the mitochondrion inner membrane. The catalysed reaction is S-adenosyl-L-homocysteine(out) + S-adenosyl-L-methionine(in) = S-adenosyl-L-homocysteine(in) + S-adenosyl-L-methionine(out). With respect to regulation, strongly inhibited by tannic acid and Bromocresol Purple. In terms of biological role, mitochondrial S-adenosyl-L-methionine/S-adenosyl-L-homocysteine antiporter. Mediates the exchange of cytosolic S-adenosyl-L-methionine, the predominant methyl-group donor for macromolecule methylation processes, for mitochondrial S-adenosylhomocysteine(SAH), a by-product of methylation reactions. The polypeptide is Mitochondrial S-adenosylmethionine carrier protein (Homo sapiens (Human)).